The primary structure comprises 743 residues: Phosphoribosylformylglycinamidine synthase subunit PurL (743 aa).

His-54 is a catalytic residue. ATP is bound by residues Tyr-57 and Lys-96. Residue Glu-98 coordinates Mg(2+). Residues 99-102 (SHNH) and Arg-121 each bind substrate. His-100 serves as the catalytic Proton acceptor. Mg(2+) is bound at residue Asp-122. Residue Gln-245 coordinates substrate. Asp-273 contributes to the Mg(2+) binding site. Residue 317 to 319 (ESQ) coordinates substrate. ATP-binding residues include Asp-501 and Gly-538. Residue Asn-539 participates in Mg(2+) binding. Ser-541 contributes to the substrate binding site.

It belongs to the FGAMS family. Monomer. Part of the FGAM synthase complex composed of 1 PurL, 1 PurQ and 2 PurS subunits.

It localises to the cytoplasm. The catalysed reaction is N(2)-formyl-N(1)-(5-phospho-beta-D-ribosyl)glycinamide + L-glutamine + ATP + H2O = 2-formamido-N(1)-(5-O-phospho-beta-D-ribosyl)acetamidine + L-glutamate + ADP + phosphate + H(+). It participates in purine metabolism; IMP biosynthesis via de novo pathway; 5-amino-1-(5-phospho-D-ribosyl)imidazole from N(2)-formyl-N(1)-(5-phospho-D-ribosyl)glycinamide: step 1/2. Part of the phosphoribosylformylglycinamidine synthase complex involved in the purines biosynthetic pathway. Catalyzes the ATP-dependent conversion of formylglycinamide ribonucleotide (FGAR) and glutamine to yield formylglycinamidine ribonucleotide (FGAM) and glutamate. The FGAM synthase complex is composed of three subunits. PurQ produces an ammonia molecule by converting glutamine to glutamate. PurL transfers the ammonia molecule to FGAR to form FGAM in an ATP-dependent manner. PurS interacts with PurQ and PurL and is thought to assist in the transfer of the ammonia molecule from PurQ to PurL. The polypeptide is Phosphoribosylformylglycinamidine synthase subunit PurL (Halalkalibacterium halodurans (strain ATCC BAA-125 / DSM 18197 / FERM 7344 / JCM 9153 / C-125) (Bacillus halodurans)).